The sequence spans 289 residues: Elongation factor Ts (289 aa).

An involved in Mg(2+) ion dislocation from EF-Tu region spans residues 82-85 (TDFL).

Belongs to the EF-Ts family.

Its subcellular location is the cytoplasm. In terms of biological role, associates with the EF-Tu.GDP complex and induces the exchange of GDP to GTP. It remains bound to the aminoacyl-tRNA.EF-Tu.GTP complex up to the GTP hydrolysis stage on the ribosome. The sequence is that of Elongation factor Ts from Azotobacter vinelandii (strain DJ / ATCC BAA-1303).